The chain runs to 299 residues: Probable xyloglucan endotransglucosylase/hydrolase protein 10 (299 aa).

Positions 1–29 are cleaved as a signal peptide; it reads MTLINRSKPFVLLVGFSIISSLLLWVSQA. The GH16 domain occupies 30–225; it reads SVVSSGDFNK…WSKGPFVASF (196 aa). The N-linked (GlcNAc...) asparagine glycan is linked to N51. E111 functions as the Nucleophile in the catalytic mechanism. Catalysis depends on E115, which acts as the Proton donor. Residues E115, 128–130, 138–140, 204–205, and G209 each bind xyloglucan; these read QTN, NRE, and SW. Intrachain disulfides connect C233–C242 and C280–C294. N-linked (GlcNAc...) asparagine glycosylation is present at N238. Position 285 (R285) interacts with xyloglucan.

Belongs to the glycosyl hydrolase 16 family. XTH group 1 subfamily. In terms of processing, contains at least one intrachain disulfide bond essential for its enzymatic activity.

Its subcellular location is the secreted. It is found in the cell wall. It localises to the extracellular space. The protein resides in the apoplast. It catalyses the reaction breaks a beta-(1-&gt;4) bond in the backbone of a xyloglucan and transfers the xyloglucanyl segment on to O-4 of the non-reducing terminal glucose residue of an acceptor, which can be a xyloglucan or an oligosaccharide of xyloglucan.. Functionally, catalyzes xyloglucan endohydrolysis (XEH) and/or endotransglycosylation (XET). Cleaves and religates xyloglucan polymers, an essential constituent of the primary cell wall, and thereby participates in cell wall construction of growing tissues. This is Probable xyloglucan endotransglucosylase/hydrolase protein 10 (XTH10) from Arabidopsis thaliana (Mouse-ear cress).